A 1303-amino-acid chain; its full sequence is Zinc finger CCCH domain-containing protein 4 (1303 aa).

A compositionally biased stretch (pro residues) spans 1–33; sequence MEAAPGTPPPPPSESPPPPSPPPPSTPSPPPCS. The segment at 1–388 is disordered; the sequence is MEAAPGTPPP…RDHDKPHQQS (388 aa). Over residues 53-73 the composition is skewed to acidic residues; it reads DREDGELEEGELEDDGAEETQ. Thr-72 and Thr-75 each carry phosphothreonine. Phosphoserine occurs at positions 76, 92, and 94. The segment covering 80–99 has biased composition (basic and acidic residues); the sequence is ERSRKEKGEKHHSDSDEEKS. The stretch at 95-128 forms a coiled coil; the sequence is DEEKSHRRLKRKRKKEREKEKRRSKKRRKSKHKR. Over residues 100–130 the composition is skewed to basic residues; that stretch reads HRRLKRKRKKEREKEKRRSKKRRKSKHKRHA. The segment covering 135-144 has biased composition (acidic residues); that stretch reads DFSDFSDDSD. Tyr-155 is modified (phosphotyrosine). The segment covering 194 to 218 has biased composition (acidic residues); it reads EDYENEQYGEYEGDEEEDMGKEDYD. Positions 219 to 235 are enriched in basic and acidic residues; it reads DFTKELNQYRRAKEGSS. A compositionally biased stretch (basic residues) spans 238 to 251; the sequence is RGSRGRGRGYRGRG. Positions 252 to 274 are enriched in gly residues; the sequence is SRGGSRGRGMGRGSRGRGRGSMG. The segment covering 278 to 304 has biased composition (acidic residues); that stretch reads PEDEEDFYEEEMDYGESEEPMGDDDYD. The segment covering 305 to 321 has biased composition (basic and acidic residues); sequence EYSKELNQYRRSKDSRG. The segment covering 323-346 has biased composition (basic residues); the sequence is GLSRGRGRGSRGRGKGMGRGRGRG. The span at 358-369 shows a compositional bias: acidic residues; that stretch reads NDDEDFYDEDMG. Basic and acidic residues predominate over residues 377-388; sequence RSRDHDKPHQQS. 3 C3H1-type zinc fingers span residues 390–417, 419–446, and 447–470; these read KKGK…HDIE, PKKR…HGDF, and PCKL…HDPL. A compositionally biased stretch (acidic residues) spans 486–496; sequence AEAGAEDEKEV. Positions 486 to 571 are disordered; the sequence is AEAGAEDEKE…HEPLSPQQLQ (86 aa). Composition is skewed to pro residues over residues 507–529 and 539–558; these read LPKP…PQAP and GGPP…PQMP. An Asymmetric dimethylarginine modification is found at Arg-601. Pro residues predominate over residues 605–624; sequence PGGPPGPMGPGPNMGPPGPM. Disordered regions lie at residues 605-685, 710-955, and 996-1288; these read PGGP…SGMM, GLLG…PRSQ, and PPVP…ASLK. Residues 630 to 650 are compositionally biased toward basic and acidic residues; it reads PDMHPDMHPDMHPDMHADMHA. The segment covering 659 to 673 has biased composition (pro residues); sequence NPGPPMGPGGPPMMP. Composition is skewed to basic and acidic residues over residues 717–739 and 782–795; these read DYGH…HPLE and ERAR…KQDR. Residues 767-800 adopt a coiled-coil conformation; sequence RALYLRIQQKQQEEEERARRLAESSKQDRENEEG. A phosphoserine mark is found at Ser-807 and Ser-808. A compositionally biased stretch (polar residues) spans 815 to 843; the sequence is SSVTSILKTLRQQTSSRPPASVGELSSSG. Residues 860–875 show a composition bias toward basic and acidic residues; it reads ADPRLSRDPRLTRHVE. Phosphoserine is present on residues Ser-904, Ser-907, and Ser-908. A compositionally biased stretch (low complexity) spans 904 to 918; it reads SLHSSPVGPSSSKGS. 2 stretches are compositionally biased toward polar residues: residues 1028–1038 and 1053–1062; these read GASTDSSTQGA and VNATGSSAAP. Basic and acidic residues predominate over residues 1067 to 1084; that stretch reads KPSDPRVRKAPTDPRLQK. Residues 1097–1110 show a composition bias toward low complexity; the sequence is PGPAEAPSPTASPS. Ser-1104 is modified (phosphoserine). Position 1106 is a phosphothreonine (Thr-1106). Phosphoserine is present on residues Ser-1108, Ser-1110, and Ser-1114. Position 1118 is a phosphothreonine (Thr-1118). Gly residues predominate over residues 1129–1139; it reads GGLGQGGGGGQ. Residues 1224–1234 are compositionally biased toward low complexity; that stretch reads KAAAAPAATTA. Residues 1235–1245 are compositionally biased toward pro residues; the sequence is TPPPEGAPPQP. Over residues 1259 to 1268 the composition is skewed to polar residues; sequence VKQTPKTGSG. Residues Ser-1269 and Ser-1275 each carry the phosphoserine modification.

It belongs to the suppressor of sable family. As to quaternary structure, interacts with WDR82.

It is found in the chromosome. In terms of biological role, RNA-binding protein that suppresses transcription of long non-coding RNAs (lncRNAs). LncRNAs are defined as transcripts more than 200 nucleotides that are not translated into protein. Together with WDR82, part of a transcription termination checkpoint that promotes transcription termination of lncRNAs and their subsequent degradation by the exosome. The transcription termination checkpoint is activated by the inefficiently spliced first exon of lncRNAs. The chain is Zinc finger CCCH domain-containing protein 4 from Homo sapiens (Human).